Consider the following 88-residue polypeptide: UPF0298 protein BC_3932 (88 aa).

Belongs to the UPF0298 family.

It localises to the cytoplasm. The sequence is that of UPF0298 protein BC_3932 from Bacillus cereus (strain ATCC 14579 / DSM 31 / CCUG 7414 / JCM 2152 / NBRC 15305 / NCIMB 9373 / NCTC 2599 / NRRL B-3711).